The primary structure comprises 248 residues: tRNA pseudouridine synthase A (248 aa).

The Nucleophile role is filled by D53. Y111 serves as a coordination point for substrate.

Belongs to the tRNA pseudouridine synthase TruA family. Homodimer.

It carries out the reaction uridine(38/39/40) in tRNA = pseudouridine(38/39/40) in tRNA. Formation of pseudouridine at positions 38, 39 and 40 in the anticodon stem and loop of transfer RNAs. The sequence is that of tRNA pseudouridine synthase A from Listeria monocytogenes serotype 4b (strain CLIP80459).